Here is a 393-residue protein sequence, read N- to C-terminus: Putative mitochondrial cysteine synthase (393 aa).

The chain crosses the membrane as a helical span at residues 12–31 (LAWRECISIASVLIGAYASY). Residue lysine 86 is modified to N6-(pyridoxal phosphate)lysine. Pyridoxal 5'-phosphate-binding positions include 230–234 (GTGGT) and serine 338.

The protein belongs to the cysteine synthase/cystathionine beta-synthase family. Requires pyridoxal 5'-phosphate as cofactor.

It is found in the mitochondrion. The protein resides in the mitochondrion outer membrane. It catalyses the reaction O-acetyl-L-serine + hydrogen sulfide = L-cysteine + acetate. In terms of biological role, putative cysteine synthase that catalyzes the conversion of O-acetyl-L-serine (OAS) into cysteine, the last step in the cysteine biosynthesis pathway. However, this CS-like protein is unlikely to function in cysteine biosynthesis. It seems that in S.cerevisiae cysteine biosynthesis occurs exclusively through the cystathionine pathway and not via direct incorporation of sulfur into OAS. This chain is Putative mitochondrial cysteine synthase, found in Saccharomyces cerevisiae (strain ATCC 204508 / S288c) (Baker's yeast).